A 238-amino-acid polypeptide reads, in one-letter code: Ribonuclease PH (238 aa).

Phosphate contacts are provided by residues arginine 86 and 124 to 126 (GTR).

The protein belongs to the RNase PH family. In terms of assembly, homohexameric ring arranged as a trimer of dimers.

It catalyses the reaction tRNA(n+1) + phosphate = tRNA(n) + a ribonucleoside 5'-diphosphate. In terms of biological role, phosphorolytic 3'-5' exoribonuclease that plays an important role in tRNA 3'-end maturation. Removes nucleotide residues following the 3'-CCA terminus of tRNAs; can also add nucleotides to the ends of RNA molecules by using nucleoside diphosphates as substrates, but this may not be physiologically important. Probably plays a role in initiation of 16S rRNA degradation (leading to ribosome degradation) during starvation. The sequence is that of Ribonuclease PH from Rhizobium rhizogenes (strain K84 / ATCC BAA-868) (Agrobacterium radiobacter).